A 175-amino-acid chain; its full sequence is Adenine phosphoribosyltransferase (175 aa).

It belongs to the purine/pyrimidine phosphoribosyltransferase family. Homodimer.

The protein localises to the cytoplasm. It carries out the reaction AMP + diphosphate = 5-phospho-alpha-D-ribose 1-diphosphate + adenine. It functions in the pathway purine metabolism; AMP biosynthesis via salvage pathway; AMP from adenine: step 1/1. Its function is as follows. Catalyzes a salvage reaction resulting in the formation of AMP, that is energically less costly than de novo synthesis. The sequence is that of Adenine phosphoribosyltransferase from Maricaulis maris (strain MCS10) (Caulobacter maris).